Reading from the N-terminus, the 297-residue chain is Thiosulfate sulfurtransferase (297 aa).

N6-acetyllysine; alternate is present on Lys14. Lys14 is subject to N6-succinyllysine; alternate. The 119-residue stretch at 25–143 folds into the Rhodanese 1 domain; the sequence is VGPSLRVLDA…WLKEGHPVTS (119 aa). Ser35 carries an O-linked (GlcNAc) serine glycan. A Phosphoserine modification is found at Ser38. Lys136 bears the N6-acetyllysine; alternate mark. Position 136 is an N6-succinyllysine; alternate (Lys136). The hinge stretch occupies residues 144 to 159; sequence EPSRPEPAVFKATLNR. Position 163 is an N6-acetyllysine (Lys163). The Rhodanese 2 domain occupies 173–288; the sequence is QSKRFQLVDS…WFRRAPPETR (116 aa). At Lys175 the chain carries N6-acetyllysine; alternate. Lys175 carries the post-translational modification N6-succinyllysine; alternate. Position 187 (Arg187) interacts with substrate. Lys224 bears the N6-acetyllysine; alternate mark. Position 224 is an N6-succinyllysine; alternate (Lys224). Position 236 is an N6-acetyllysine (Lys236). Position 237 is an N6-acetyllysine; alternate (Lys237). At Lys237 the chain carries N6-succinyllysine; alternate. Catalysis depends on Cys248, which acts as the Cysteine persulfide intermediate. Substrate is bound at residue Lys250.

Monomer. Expressed in numerous tissues.

The protein resides in the mitochondrion matrix. It catalyses the reaction thiosulfate + hydrogen cyanide = thiocyanate + sulfite + 2 H(+). Functionally, together with MRPL18, acts as a mitochondrial import factor for the cytosolic 5S rRNA. Only the nascent unfolded cytoplasmic form is able to bind to the 5S rRNA. Involved in the formation of iron-sulfur complexes, cyanide detoxification or modification of sulfur-containing enzymes. Other thiol compounds, besides cyanide, can act as sulfur ion acceptors. Also has weak mercaptopyruvate sulfurtransferase (MST) activity. This chain is Thiosulfate sulfurtransferase (Tst), found in Rattus norvegicus (Rat).